A 110-amino-acid chain; its full sequence is Early E3B 12.7 kDa protein (110 aa).

The signal sequence occupies residues M1–A16. A helical transmembrane segment spans residues Y37–L57.

The protein belongs to the adenoviridae E3_14 family. In terms of processing, phosphorylated on serine; O-glycosylated, but not N-glycosylated.

The protein resides in the host membrane. Its function is as follows. Down-regulates the EGF receptor and prevents cytolysis by TNF. This chain is Early E3B 12.7 kDa protein, found in Homo sapiens (Human).